The primary structure comprises 325 residues: GTP 3',8-cyclase (325 aa).

In terms of domain architecture, Radical SAM core spans 10–229 (GYGRRINYLR…PSLEKIKSED (220 aa)). Residue arginine 19 participates in GTP binding. 2 residues coordinate [4Fe-4S] cluster: cysteine 26 and cysteine 30. Tyrosine 32 is an S-adenosyl-L-methionine binding site. Cysteine 33 provides a ligand contact to [4Fe-4S] cluster. Arginine 69 lines the GTP pocket. Residue glycine 73 participates in S-adenosyl-L-methionine binding. A GTP-binding site is contributed by threonine 100. An S-adenosyl-L-methionine-binding site is contributed by serine 124. A GTP-binding site is contributed by lysine 161. Methionine 195 is an S-adenosyl-L-methionine binding site. 2 residues coordinate [4Fe-4S] cluster: cysteine 257 and cysteine 260. GTP is bound at residue 262 to 264 (RLR). Cysteine 274 is a [4Fe-4S] cluster binding site.

The protein belongs to the radical SAM superfamily. MoaA family. Monomer and homodimer. The cofactor is [4Fe-4S] cluster.

The enzyme catalyses GTP + AH2 + S-adenosyl-L-methionine = (8S)-3',8-cyclo-7,8-dihydroguanosine 5'-triphosphate + 5'-deoxyadenosine + L-methionine + A + H(+). The protein operates within cofactor biosynthesis; molybdopterin biosynthesis. Functionally, catalyzes the cyclization of GTP to (8S)-3',8-cyclo-7,8-dihydroguanosine 5'-triphosphate. In Peptoclostridium acidaminophilum (Eubacterium acidaminophilum), this protein is GTP 3',8-cyclase.